Reading from the N-terminus, the 330-residue chain is Nitrilase 3 (330 aa).

The CN hydrolase domain maps to 4–273 (VKAAAVQISP…EGEVIVDLDF (270 aa)). The Proton acceptor role is filled by Glu-44. The active-site Proton donor is the Lys-128. Cys-162 acts as the Nucleophile in catalysis. Residues 310-330 (RAAHPVSGAEQGPEDLRTPAA) form a disordered region.

This sequence belongs to the carbon-nitrogen hydrolase superfamily. Nitrilase family.

The catalysed reaction is a nitrile + 2 H2O = a carboxylate + NH4(+). Its function is as follows. Nitrilases catalyze the mild hydrolytic conversion of organonitriles directly to the corresponding carboxylic acids. In Unknown prokaryotic organism, this protein is Nitrilase 3.